Here is a 217-residue protein sequence, read N- to C-terminus: N-(5'-phosphoribosyl)anthranilate isomerase (217 aa).

It belongs to the TrpF family.

The catalysed reaction is N-(5-phospho-beta-D-ribosyl)anthranilate = 1-(2-carboxyphenylamino)-1-deoxy-D-ribulose 5-phosphate. It participates in amino-acid biosynthesis; L-tryptophan biosynthesis; L-tryptophan from chorismate: step 3/5. The polypeptide is N-(5'-phosphoribosyl)anthranilate isomerase (Synechococcus elongatus (strain ATCC 33912 / PCC 7942 / FACHB-805) (Anacystis nidulans R2)).